Consider the following 402-residue polypeptide: Speedy protein E6 (402 aa).

Positions 1-89 (MDRTETRFRK…EEPEKELAPE (89 aa)) are disordered. Positions 16 to 39 (GKITTSRQPHPQNEQSPQRSTSGY) are enriched in polar residues. Positions 76–89 (DESEEEPEKELAPE) are enriched in acidic residues.

It belongs to the Speedy/Ringo family.

This is Speedy protein E6 (SPDYE6) from Homo sapiens (Human).